A 419-amino-acid chain; its full sequence is 3-isopropylmalate dehydratase large subunit (419 aa).

[4Fe-4S] cluster contacts are provided by Cys-300, Cys-360, and Cys-363.

Belongs to the aconitase/IPM isomerase family. LeuC type 2 subfamily. In terms of assembly, heterodimer of LeuC and LeuD. Requires [4Fe-4S] cluster as cofactor.

The enzyme catalyses (2R,3S)-3-isopropylmalate = (2S)-2-isopropylmalate. The protein operates within amino-acid biosynthesis; L-leucine biosynthesis; L-leucine from 3-methyl-2-oxobutanoate: step 2/4. Catalyzes the isomerization between 2-isopropylmalate and 3-isopropylmalate, via the formation of 2-isopropylmaleate. This Desulfatibacillum aliphaticivorans protein is 3-isopropylmalate dehydratase large subunit.